The primary structure comprises 244 residues: Aspartate/glutamate leucyltransferase (244 aa).

Belongs to the R-transferase family. Bpt subfamily.

It is found in the cytoplasm. The catalysed reaction is N-terminal L-glutamyl-[protein] + L-leucyl-tRNA(Leu) = N-terminal L-leucyl-L-glutamyl-[protein] + tRNA(Leu) + H(+). The enzyme catalyses N-terminal L-aspartyl-[protein] + L-leucyl-tRNA(Leu) = N-terminal L-leucyl-L-aspartyl-[protein] + tRNA(Leu) + H(+). Functions in the N-end rule pathway of protein degradation where it conjugates Leu from its aminoacyl-tRNA to the N-termini of proteins containing an N-terminal aspartate or glutamate. This chain is Aspartate/glutamate leucyltransferase, found in Bordetella bronchiseptica (strain ATCC BAA-588 / NCTC 13252 / RB50) (Alcaligenes bronchisepticus).